The following is a 631-amino-acid chain: ATP-dependent zinc metalloprotease FtsH (631 aa).

The Cytoplasmic segment spans residues methionine 1–asparagine 5. Residues proline 6–alanine 26 form a helical membrane-spanning segment. Residues arginine 27 to glycine 102 lie on the Periplasmic side of the membrane. A helical transmembrane segment spans residues tryptophan 103–tryptophan 123. The Cytoplasmic portion of the chain corresponds to methionine 124–serine 631. Position 196–203 (glycine 196–threonine 203) interacts with ATP. Histidine 418 serves as a coordination point for Zn(2+). Glutamate 419 is a catalytic residue. Residues histidine 422 and aspartate 494 each contribute to the Zn(2+) site.

This sequence in the central section; belongs to the AAA ATPase family. In the C-terminal section; belongs to the peptidase M41 family. As to quaternary structure, homohexamer. Zn(2+) is required as a cofactor.

Its subcellular location is the cell inner membrane. In terms of biological role, acts as a processive, ATP-dependent zinc metallopeptidase for both cytoplasmic and membrane proteins. Plays a role in the quality control of integral membrane proteins. The polypeptide is ATP-dependent zinc metalloprotease FtsH (Endomicrobium trichonymphae).